Consider the following 283-residue polypeptide: Flagellar filament 35 kDa core protein (283 aa).

Belongs to the bacterial flagellin family. As to quaternary structure, the flagellum consists of two outer layers around a core that contains several antigenically related polypeptides.

It is found in the periplasmic flagellum. It localises to the periplasm. In terms of biological role, component of the core of the flagella. This Leptospira interrogans serogroup Icterohaemorrhagiae serovar copenhageni (strain Fiocruz L1-130) protein is Flagellar filament 35 kDa core protein (flaB).